Consider the following 226-residue polypeptide: MNHIVTKKIQKVLGYTFTHKDLLKQALTHRSASSKHNERLEFLGDSILSFVIANALYQHFPYIDEGDMSRMRATLVRGNTLAEIAYEFDLGEYLKLGQGELKSGGFRRESILANTVEALIGSIYLDSNIKTVEELILKWYEKRLEKISPGDTQKDPKTRLQEYLQSKHLSLPLYFIVEVYGEAHNQLFTIHCKISTISEYLIGTGSSRRKAEQDAAQKALIKLGVE.

The RNase III domain maps to Thr-6–Asn-128. Residue Glu-41 participates in Mg(2+) binding. Asp-45 is an active-site residue. Mg(2+) contacts are provided by Asn-114 and Glu-117. Glu-117 is an active-site residue. The 71-residue stretch at Asp-155–Val-225 folds into the DRBM domain.

The protein belongs to the ribonuclease III family. As to quaternary structure, homodimer. The cofactor is Mg(2+).

Its subcellular location is the cytoplasm. The catalysed reaction is Endonucleolytic cleavage to 5'-phosphomonoester.. In terms of biological role, digests double-stranded RNA. Involved in the processing of primary rRNA transcript to yield the immediate precursors to the large and small rRNAs (23S and 16S). Processes some mRNAs, and tRNAs when they are encoded in the rRNA operon. Processes pre-crRNA and tracrRNA of type II CRISPR loci if present in the organism. The chain is Ribonuclease 3 from Buchnera aphidicola subsp. Acyrthosiphon pisum (strain 5A).